Here is a 332-residue protein sequence, read N- to C-terminus: Ornithine carbamoyltransferase, catabolic (332 aa).

Carbamoyl phosphate-binding positions include S60 to T63, Q87, R111, and H138 to Q141. L-ornithine contacts are provided by residues N170, D230, and S234–M235. Carbamoyl phosphate-binding positions include C271–L272 and R316.

This sequence belongs to the aspartate/ornithine carbamoyltransferase superfamily. OTCase family.

The protein resides in the cytoplasm. It catalyses the reaction carbamoyl phosphate + L-ornithine = L-citrulline + phosphate + H(+). It functions in the pathway amino-acid degradation; L-arginine degradation via ADI pathway; carbamoyl phosphate from L-arginine: step 2/2. In terms of biological role, reversibly catalyzes the transfer of the carbamoyl group from carbamoyl phosphate (CP) to the N(epsilon) atom of ornithine (ORN) to produce L-citrulline. The chain is Ornithine carbamoyltransferase, catabolic from Bacillus cereus (strain ATCC 10987 / NRS 248).